Consider the following 312-residue polypeptide: Glyoxylate/hydroxypyruvate reductase A (312 aa).

The active site involves arginine 227. The Proton donor role is filled by histidine 275.

It belongs to the D-isomer specific 2-hydroxyacid dehydrogenase family. GhrA subfamily.

The protein resides in the cytoplasm. The catalysed reaction is glycolate + NADP(+) = glyoxylate + NADPH + H(+). It carries out the reaction (R)-glycerate + NAD(+) = 3-hydroxypyruvate + NADH + H(+). It catalyses the reaction (R)-glycerate + NADP(+) = 3-hydroxypyruvate + NADPH + H(+). Catalyzes the NADPH-dependent reduction of glyoxylate and hydroxypyruvate into glycolate and glycerate, respectively. This chain is Glyoxylate/hydroxypyruvate reductase A, found in Enterobacter sp. (strain 638).